Here is a 1342-residue protein sequence, read N- to C-terminus: DNA-directed RNA polymerase subunit beta (1342 aa).

This sequence belongs to the RNA polymerase beta chain family. As to quaternary structure, the RNAP catalytic core consists of 2 alpha, 1 beta, 1 beta' and 1 omega subunit. When a sigma factor is associated with the core the holoenzyme is formed, which can initiate transcription.

It catalyses the reaction RNA(n) + a ribonucleoside 5'-triphosphate = RNA(n+1) + diphosphate. In terms of biological role, DNA-dependent RNA polymerase catalyzes the transcription of DNA into RNA using the four ribonucleoside triphosphates as substrates. In Actinobacillus pleuropneumoniae serotype 5b (strain L20), this protein is DNA-directed RNA polymerase subunit beta.